The sequence spans 340 residues: DNA-directed RNA polymerase subunit alpha (340 aa).

An alpha N-terminal domain (alpha-NTD) region spans residues 1–226; that stretch reads MLIAQRPSLT…ELFGLARELN (226 aa). The segment at 243–340 is alpha C-terminal domain (alpha-CTD); sequence LAADLALPIE…DAGFVETEQY (98 aa).

Belongs to the RNA polymerase alpha chain family. In terms of assembly, homodimer. The RNAP catalytic core consists of 2 alpha, 1 beta, 1 beta' and 1 omega subunit. When a sigma factor is associated with the core the holoenzyme is formed, which can initiate transcription.

It carries out the reaction RNA(n) + a ribonucleoside 5'-triphosphate = RNA(n+1) + diphosphate. Functionally, DNA-dependent RNA polymerase catalyzes the transcription of DNA into RNA using the four ribonucleoside triphosphates as substrates. The chain is DNA-directed RNA polymerase subunit alpha from Streptomyces avermitilis (strain ATCC 31267 / DSM 46492 / JCM 5070 / NBRC 14893 / NCIMB 12804 / NRRL 8165 / MA-4680).